The sequence spans 156 residues: Ribosomal RNA large subunit methyltransferase H (156 aa).

Residues G104 and 123 to 128 (LSAMTL) contribute to the S-adenosyl-L-methionine site.

It belongs to the RNA methyltransferase RlmH family. As to quaternary structure, homodimer.

The protein localises to the cytoplasm. It catalyses the reaction pseudouridine(1915) in 23S rRNA + S-adenosyl-L-methionine = N(3)-methylpseudouridine(1915) in 23S rRNA + S-adenosyl-L-homocysteine + H(+). In terms of biological role, specifically methylates the pseudouridine at position 1915 (m3Psi1915) in 23S rRNA. The chain is Ribosomal RNA large subunit methyltransferase H from Chromobacterium violaceum (strain ATCC 12472 / DSM 30191 / JCM 1249 / CCUG 213 / NBRC 12614 / NCIMB 9131 / NCTC 9757 / MK).